A 123-amino-acid chain; its full sequence is Small ribosomal subunit protein uS12cz/uS12cy (123 aa).

This sequence belongs to the universal ribosomal protein uS12 family. In terms of assembly, part of the 30S ribosomal subunit.

Its subcellular location is the plastid. It is found in the chloroplast. Its function is as follows. With S4 and S5 plays an important role in translational accuracy. Located at the interface of the 30S and 50S subunits. This Cucumis sativus (Cucumber) protein is Small ribosomal subunit protein uS12cz/uS12cy (rps12-A).